The chain runs to 523 residues: Sensory neuron membrane protein 1 (523 aa).

Residues 1 to 11 are Cytoplasmic-facing; sequence MQLPKELKYAA. A helical transmembrane segment spans residues 12 to 32; sequence IAGGVALFGLIFGWVLFPTIL. At 33-458 the chain is on the extracellular side; it reads KSQLKKEMAL…HQLFIPKRVV (426 aa). N-linked (GlcNAc...) asparagine glycans are attached at residues asparagine 67 and asparagine 229. Cystine bridges form between cysteine 268–cysteine 333, cysteine 297–cysteine 352, and cysteine 335–cysteine 341. An N-linked (GlcNAc...) asparagine glycan is attached at asparagine 440. Residues 459 to 479 form a helical membrane-spanning segment; that stretch reads GVLRWWVVSFGSLGAVIGIVF. At 480–523 the chain is on the cytoplasmic side; sequence HFRDHIMRLAVSGDTKVSKVTPEEPEQKDISVIGQAQEPAKVNI.

It belongs to the CD36 family. As to expression, detected in sensory neurons in the antenna.

The protein resides in the cell membrane. Its function is as follows. Plays an olfactory role that is not restricted to pheromone sensitivity. This is Sensory neuron membrane protein 1 from Heliothis virescens (Tobacco budworm moth).